The primary structure comprises 612 residues: Rhotekin-2 (612 aa).

The 77-residue stretch at 3-79 (IKRKKIRESA…LRSQMGESNT (77 aa)) folds into the REM-1 domain. Positions 285-392 (DEAMMGFLNQ…WMEAFWQHFY (108 aa)) constitute a PH domain. 2 disordered regions span residues 483–530 (RNKP…SDKE) and 574–612 (ENKA…QSQV). Residues 486 to 498 (PPLLSSDDPSTSS) show a composition bias toward low complexity.

The chain is Rhotekin-2 (rtkn2) from Xenopus laevis (African clawed frog).